Here is a 922-residue protein sequence, read N- to C-terminus: Probable outer membrane protein pmp1 (922 aa).

The N-terminal stretch at 1-26 is a signal peptide; sequence MRFSLCGFPLVFSFTLLSVFDTSLSA. Residues 620 to 922 form the Autotransporter domain; it reads SLQTDRGLWI…NINCGSKFRF (303 aa).

This sequence belongs to the PMP outer membrane protein family.

Its subcellular location is the secreted. It localises to the cell wall. The protein localises to the cell outer membrane. In Chlamydia pneumoniae (Chlamydophila pneumoniae), this protein is Probable outer membrane protein pmp1 (pmp1).